A 429-amino-acid chain; its full sequence is 3-phosphoshikimate 1-carboxyvinyltransferase (429 aa).

3-phosphoshikimate is bound by residues Lys23, Ser24, and Arg28. Phosphoenolpyruvate is bound at residue Lys23. Phosphoenolpyruvate contacts are provided by Gly95 and Arg123. Ser168, Gln170, Asp316, and Lys343 together coordinate 3-phosphoshikimate. Gln170 contacts phosphoenolpyruvate. The Proton acceptor role is filled by Asp316. Residues Arg347 and Arg389 each contribute to the phosphoenolpyruvate site.

This sequence belongs to the EPSP synthase family. Monomer.

The protein localises to the cytoplasm. It carries out the reaction 3-phosphoshikimate + phosphoenolpyruvate = 5-O-(1-carboxyvinyl)-3-phosphoshikimate + phosphate. The protein operates within metabolic intermediate biosynthesis; chorismate biosynthesis; chorismate from D-erythrose 4-phosphate and phosphoenolpyruvate: step 6/7. Functionally, catalyzes the transfer of the enolpyruvyl moiety of phosphoenolpyruvate (PEP) to the 5-hydroxyl of shikimate-3-phosphate (S3P) to produce enolpyruvyl shikimate-3-phosphate and inorganic phosphate. This is 3-phosphoshikimate 1-carboxyvinyltransferase from Bacillus cereus (strain B4264).